The primary structure comprises 93 residues: Small ribosomal subunit protein bS16 (93 aa).

This sequence belongs to the bacterial ribosomal protein bS16 family.

The polypeptide is Small ribosomal subunit protein bS16 (Dictyoglomus turgidum (strain DSM 6724 / Z-1310)).